The chain runs to 429 residues: Probable M18 family aminopeptidase 2 (429 aa).

Positions 82, 156, and 401 each coordinate Zn(2+).

This sequence belongs to the peptidase M18 family. Zn(2+) is required as a cofactor.

The chain is Probable M18 family aminopeptidase 2 from Pseudomonas fluorescens (strain SBW25).